The chain runs to 194 residues: 7-methyl-GTP pyrophosphatase (194 aa).

Catalysis depends on Asp69, which acts as the Proton acceptor.

Belongs to the Maf family. YceF subfamily. A divalent metal cation is required as a cofactor.

The protein localises to the cytoplasm. It catalyses the reaction N(7)-methyl-GTP + H2O = N(7)-methyl-GMP + diphosphate + H(+). Its function is as follows. Nucleoside triphosphate pyrophosphatase that hydrolyzes 7-methyl-GTP (m(7)GTP). May have a dual role in cell division arrest and in preventing the incorporation of modified nucleotides into cellular nucleic acids. In Sodalis glossinidius (strain morsitans), this protein is 7-methyl-GTP pyrophosphatase.